A 274-amino-acid chain; its full sequence is NADPH-dependent 7-cyano-7-deazaguanine reductase (274 aa).

80 to 82 (VES) lines the substrate pocket. 82–83 (SK) is an NADPH binding site. Cys-181 serves as the catalytic Thioimide intermediate. Residue Asp-188 is the Proton donor of the active site. Substrate is bound at residue 220-221 (HE). 249-250 (RG) contacts NADPH.

The protein belongs to the GTP cyclohydrolase I family. QueF type 2 subfamily. As to quaternary structure, homodimer.

The protein resides in the cytoplasm. The enzyme catalyses 7-aminomethyl-7-carbaguanine + 2 NADP(+) = 7-cyano-7-deazaguanine + 2 NADPH + 3 H(+). The protein operates within tRNA modification; tRNA-queuosine biosynthesis. Functionally, catalyzes the NADPH-dependent reduction of 7-cyano-7-deazaguanine (preQ0) to 7-aminomethyl-7-deazaguanine (preQ1). In Paraburkholderia phymatum (strain DSM 17167 / CIP 108236 / LMG 21445 / STM815) (Burkholderia phymatum), this protein is NADPH-dependent 7-cyano-7-deazaguanine reductase.